The sequence spans 881 residues: Armadillo repeat-containing protein 3 (881 aa).

ARM repeat units follow at residues 15-54 (DVFD…KFAL), 57-96 (EENK…ILAS), 98-138 (SDVK…NMSV), 140-179 (YTGK…NLVQ), 181-220 (FQCR…VITC), 222-262 (KEAR…NCLE), 264-304 (MDTM…KAAY), 306-345 (PENR…ALCE), 346-385 (NLSC…NLTT), 388-427 (PANA…NMAT), 429-468 (EPLR…ATAC), and 470-509 (VEAR…VCAG). S-palmitoyl cysteine attachment occurs at residues C507 and C518. The disordered stretch occupies residues 605–659 (NNKSDTSPPPSMEDKSSDVGYGRSISSSSSLRRGSKEKANAIFGSPTEEKSEPAS). Over residues 622 to 636 (DVGYGRSISSSSSLR) the composition is skewed to low complexity.

As to quaternary structure, homodimer. Interacts with PIK3C3, PIK3R4 and BECN1. Interacts (via ARM domains) with ATG14. In terms of processing, palmitoylation is important for its function in autophagy. Testis-specific.

In terms of biological role, essential for male fertility and sperm motility. During spermatogenesis, promotes the autophagic degradation of excessive ribosomes, providing energy resources for mitochondria and thus ensuring sperm flagellar motility. The sequence is that of Armadillo repeat-containing protein 3 (Armc3) from Mus musculus (Mouse).